Here is a 206-residue protein sequence, read N- to C-terminus: Guanylate kinase (206 aa).

Positions 5-183 (FNLLILSGPS…SKEIILSIAK (179 aa)) constitute a Guanylate kinase-like domain. Residue 12–19 (GPSGAGKS) coordinates ATP.

This sequence belongs to the guanylate kinase family.

The protein localises to the cytoplasm. The catalysed reaction is GMP + ATP = GDP + ADP. In terms of biological role, essential for recycling GMP and indirectly, cGMP. This Helicobacter pylori (strain HPAG1) protein is Guanylate kinase.